Reading from the N-terminus, the 216-residue chain is Octanoyltransferase (216 aa).

In terms of domain architecture, BPL/LPL catalytic spans 35–213; the sequence is NSNPDFIWIG…IIQEEFNFDF (179 aa). Substrate is bound by residues 77–84, 144–146, and 157–159; these read RGGEVTCH, SIG, and GFS. Cysteine 175 functions as the Acyl-thioester intermediate in the catalytic mechanism.

It belongs to the LipB family.

The protein resides in the cytoplasm. It catalyses the reaction octanoyl-[ACP] + L-lysyl-[protein] = N(6)-octanoyl-L-lysyl-[protein] + holo-[ACP] + H(+). The protein operates within protein modification; protein lipoylation via endogenous pathway; protein N(6)-(lipoyl)lysine from octanoyl-[acyl-carrier-protein]: step 1/2. Its function is as follows. Catalyzes the transfer of endogenously produced octanoic acid from octanoyl-acyl-carrier-protein onto the lipoyl domains of lipoate-dependent enzymes. Lipoyl-ACP can also act as a substrate although octanoyl-ACP is likely to be the physiological substrate. The protein is Octanoyltransferase of Prochlorococcus marinus (strain MIT 9215).